Reading from the N-terminus, the 384-residue chain is NADH-ubiquinone oxidoreductase chain 5 (384 aa).

12 helical membrane-spanning segments follow: residues 12-32, 50-70, 92-112, 113-133, 153-173, 183-203, 215-235, 244-264, 274-293, 298-320, 343-363, and 364-384; these read FYFLMSISLSLFLISLKFLLM, IVMTFLFDWMSLMFMSFVLLI, ILLVLMFVMSMMMLIISPNLI, SILLGWDGLGLVSYCLVIYFQ, VALLLAIAWMLNYGSWNYIFY, MMIIGGLVMLAAMTKSAQIPF, TPVSALVHSSTLVTAGVYLLI, WWMAQFLLLVSGLTMFMAGLG, IIALSTLSQLGLMMSILSMG, AFFHLLTHALFKALLFMCAGSII, CSCFNVANLALCGMPFLAGFY, and SKDLILEMVMLSYVNVFSFFL.

This sequence belongs to the complex I subunit 5 family.

The protein resides in the mitochondrion inner membrane. The enzyme catalyses a ubiquinone + NADH + 5 H(+)(in) = a ubiquinol + NAD(+) + 4 H(+)(out). Its function is as follows. Core subunit of the mitochondrial membrane respiratory chain NADH dehydrogenase (Complex I) that is believed to belong to the minimal assembly required for catalysis. Complex I functions in the transfer of electrons from NADH to the respiratory chain. The immediate electron acceptor for the enzyme is believed to be ubiquinone. The polypeptide is NADH-ubiquinone oxidoreductase chain 5 (ND5) (Anopheles arabiensis (Mosquito)).